The primary structure comprises 330 residues: MKIKATIERVPGGMMIIPLFLGAALNTFAPGTAEFFGGFTGALITGTLPILGVFIFCVGATIDFRSSGYIARKGITLLLGKIGFAALLGVIAAQFIPDDGIQSGFFAGLSVLAIVAVMNETNGGLYLALMNHMGRKEDAGAFAFISTESGPFMTMVTFGVTGLAAFPWETLAATVIPFLLGCILGNLDHDLRDLFSKVVPAIIPFFAFSLGNTLNFGMLIQSGLLGIFIGVSVVILSGSSLFLLDRFIARGDGVAGVAASSTAGAAVAVPYALAEANASFAPVAESATAIIATSVIVTSLLTPLATVWVDKKIKQKKRRTPPPKNQMTIN.

A run of 10 helical transmembrane segments spans residues 10–30, 42–62, 77–97, 100–120, 140–160, 163–183, 200–220, 224–244, 254–274, and 289–309; these read VPGG…TFAP, ALIT…GATI, LLLG…QFIP, GIQS…VMNE, GAFA…TFGV, LAAF…LGCI, PAII…GMLI, LLGI…LFLL, VAGV…YALA, and AIIA…TVWV.

The protein belongs to the KdgT transporter family.

The protein localises to the cell membrane. It catalyses the reaction 2-dehydro-3-deoxy-D-gluconate(in) + H(+)(in) = 2-dehydro-3-deoxy-D-gluconate(out) + H(+)(out). Functionally, catalyzes the proton-dependent uptake of 2-keto-3-deoxygluconate (KDG) into the cell. This is 2-keto-3-deoxygluconate permease from Bacillus subtilis (strain 168).